We begin with the raw amino-acid sequence, 297 residues long: Adrenocorticotropic hormone receptor (297 aa).

Over 1–23 (MKHIIHASGNVNGTARNNSDCPH) the chain is Extracellular. Residues Asn-12 and Asn-17 are each glycosylated (N-linked (GlcNAc...) asparagine). 2 disulfide bridges follow: Cys-21–Cys-253 and Cys-245–Cys-251. A helical transmembrane segment spans residues 24–49 (VALPEEIFFIISITGVLENLIIILAV). The Cytoplasmic portion of the chain corresponds to 50–58 (IKNKNLQFP). Residues 59 to 79 (MYFFICSLAISDMLGSLYKIL) form a helical membrane-spanning segment. Residues 80 to 104 (ESILIMFRNMGYFKPHGSFETTTDD) lie on the Extracellular side of the membrane. Residues 105-126 (IIDTMFILSLLGSIFSLLAIAV) traverse the membrane as a helical segment. The Cytoplasmic segment spans residues 127–147 (DRYITIFHALQYHSIVTMHRT). The chain crosses the membrane as a helical span at residues 148–168 (IAVLSIIWTFCIGSGITMVLF). The Extracellular portion of the chain corresponds to 169-180 (SHHVPTVLTFTS). The helical transmembrane segment at 181–199 (LFPLMLVFILCLYVHMFLM) threads the bilayer. Topologically, residues 200–217 (ARSHARNISTLPRGNMRG) are cytoplasmic. A helical membrane pass occupies residues 218–244 (AITLTILLGVFIFCWAPFILHILLVTF). Topologically, residues 245–256 (CPNNPYCTCYIS) are extracellular. Residues 257–278 (LFHVNGMLIMCNAVIDPFIYAF) traverse the membrane as a helical segment. At 279-297 (RSPELRSAFRRMISYSKCL) the chain is on the cytoplasmic side. The S-palmitoyl cysteine moiety is linked to residue Cys-296.

It belongs to the G-protein coupled receptor 1 family. In terms of assembly, homodimer. Interacts with corticotropin (ACTH). Interacts with MRAP; this interaction targets MC2R to the plasma membrane. Interacts with MRAP2; competing with MRAP for binding to MC2R and impairing the binding of corticotropin (ACTH). Post-translationally, ubiquitinated by MGRN1 that may be involved in post-endocytic trafficking and/or degradation of internalized receptor.

Its subcellular location is the cell membrane. Functionally, hormone receptor primarily expressed in adrenal cortex that plays a key role in regulating adrenocortical function. Upon corticotropin (ACTH) binding, facilitates the release of adrenal glucocorticoids, including cortisol and corticosterone. In addition, MC2R is required for fetal and neonatal adrenal gland development. Mechanistically, activates adenylate cyclase (cAMP), the MAPK cascade as well as the cAMP-dependent protein kinase A pathway leading to steroidogenic factor 1/NR5A1-mediated transcriptional activation. The sequence is that of Adrenocorticotropic hormone receptor (MC2R) from Cavia porcellus (Guinea pig).